The following is an 880-amino-acid chain: Leucine--tRNA ligase (880 aa).

Positions 46-56 match the 'HIGH' region motif; the sequence is PYPSGALHMGH. Residues 638-642 carry the 'KMSKS' region motif; that stretch reads KMSKS. Lys-641 lines the ATP pocket.

The protein belongs to the class-I aminoacyl-tRNA synthetase family.

The protein localises to the cytoplasm. The enzyme catalyses tRNA(Leu) + L-leucine + ATP = L-leucyl-tRNA(Leu) + AMP + diphosphate. This is Leucine--tRNA ligase from Xanthomonas axonopodis pv. citri (strain 306).